We begin with the raw amino-acid sequence, 429 residues long: Glutamate-1-semialdehyde 2,1-aminomutase 2 (429 aa).

Lys267 is modified (N6-(pyridoxal phosphate)lysine).

This sequence belongs to the class-III pyridoxal-phosphate-dependent aminotransferase family. HemL subfamily. As to quaternary structure, homodimer. The cofactor is pyridoxal 5'-phosphate.

It is found in the cytoplasm. The catalysed reaction is (S)-4-amino-5-oxopentanoate = 5-aminolevulinate. Its pathway is porphyrin-containing compound metabolism; protoporphyrin-IX biosynthesis; 5-aminolevulinate from L-glutamyl-tRNA(Glu): step 2/2. This is Glutamate-1-semialdehyde 2,1-aminomutase 2 from Brevibacillus brevis (strain 47 / JCM 6285 / NBRC 100599).